Here is a 580-residue protein sequence, read N- to C-terminus: Probable inositol transporter 2 (580 aa).

A run of 12 helical transmembrane segments spans residues 36-56 (GIGG…LLYI), 71-91 (EMIV…GGWA), 106-126 (FLFL…LLVV), 129-149 (VFVG…ISEA), 156-176 (GALV…SYLI), 189-209 (WMLG…FTLP), 275-295 (GLIA…NTVM), 315-335 (LLSL…IYFI), 343-363 (LLII…GVFY), 452-472 (FGWF…PGMG), 490-510 (ICGG…AQSF), and 521-541 (WTFL…MVCV).

Belongs to the major facilitator superfamily. Sugar transporter (TC 2.A.1.1) family. Expressed in the tapetum, but not in pollen grains. Detected in leaf vascular tissue and in roots.

The protein localises to the cell membrane. With respect to regulation, inhibited by nickel and to a lesser extent by cobalt. Plasma membrane inositol-proton symporter. Specific for several inositol epimers, such as myoinositol and scylloinositol. D-chiroinositol, mucoinositol, alloinositol and pinitol are also transported with a lower activity. Not active with galactinol and phytate. The protein is Probable inositol transporter 2 (INT2) of Arabidopsis thaliana (Mouse-ear cress).